Here is a 75-residue protein sequence, read N- to C-terminus: Exodeoxyribonuclease 7 small subunit (75 aa).

The protein belongs to the XseB family. As to quaternary structure, heterooligomer composed of large and small subunits.

The protein resides in the cytoplasm. The enzyme catalyses Exonucleolytic cleavage in either 5'- to 3'- or 3'- to 5'-direction to yield nucleoside 5'-phosphates.. In terms of biological role, bidirectionally degrades single-stranded DNA into large acid-insoluble oligonucleotides, which are then degraded further into small acid-soluble oligonucleotides. This chain is Exodeoxyribonuclease 7 small subunit, found in Thermoanaerobacter sp. (strain X514).